Consider the following 561-residue polypeptide: Asparagine synthetase [glutamine-hydrolyzing] (561 aa).

Cysteine 2 functions as the For GATase activity in the catalytic mechanism. The Glutamine amidotransferase type-2 domain maps to 2-191; that stretch reads CGIWALFGSD…PGHYEVLDLK (190 aa). L-glutamine contacts are provided by residues 49–53, 75–77, and aspartate 97; these read RLAVV and NGE. Positions 213–536 constitute an Asparagine synthetase domain; the sequence is HALYDNVEKL…PGRADWLSHY (324 aa). ATP contacts are provided by residues leucine 256, isoleucine 288, and 363–364; that span reads SG. Residue lysine 385 is modified to N6-acetyllysine. Position 545 is a phosphothreonine (threonine 545). Serine 557 is modified (phosphoserine).

The catalysed reaction is L-aspartate + L-glutamine + ATP + H2O = L-asparagine + L-glutamate + AMP + diphosphate + H(+). Its pathway is amino-acid biosynthesis; L-asparagine biosynthesis; L-asparagine from L-aspartate (L-Gln route): step 1/1. The polypeptide is Asparagine synthetase [glutamine-hydrolyzing] (ASNS) (Homo sapiens (Human)).